We begin with the raw amino-acid sequence, 887 residues long: Dystrophin-like protein 1 (887 aa).

Residues 30-197 (YQHGIHFEAK…KISMQSEDEA (168 aa)) enclose the PID domain. Basic and acidic residues-rich tracts occupy residues 176 to 186 (MQEKHEDEAAK) and 205 to 216 (IEERGGREEDSR). 5 disordered regions span residues 176–254 (MQEK…GTAI), 506–606 (EIHH…QYER), 641–753 (QFDM…KNTA), 804–839 (IAEE…PPNT), and 853–887 (NVDR…GYPQ). Polar residues predominate over residues 242-254 (KPSTTSSSGGTAI). Positions 434-506 (QLMRSQLDQA…QMLETKITSE (73 aa)) form a coiled coil. Over residues 510–519 (SSSQPPQHQP) the composition is skewed to low complexity. Positions 573 to 588 (KESKERRKDEGTRTEP) are enriched in basic and acidic residues. Over residues 597-606 (DYSSSDQYER) the composition is skewed to polar residues. 2 stretches are compositionally biased toward polar residues: residues 816 to 827 (NRNNLPSSTNSS) and 863 to 887 (SLLT…GYPQ).

In terms of assembly, component of the dystrophin glycoprotein complex (DGC). Interacts with zyx-1. In terms of tissue distribution, expressed in muscles of the head, body wall and vulva. In some animals, weaker expression is observed in the intestinal muscles (at protein level). Isoform a is expressed in lateral neurons SDQL and SDQR.

Its function is as follows. Together with dys-1 and hlh-1, participates in a common muscular function. The chain is Dystrophin-like protein 1 from Caenorhabditis elegans.